The primary structure comprises 230 residues: Eukaryotic translation initiation factor 4E-1 (230 aa).

Residues 1–53 (MVVEDSQKSTITDEQNPSRVDNDDDDLEDGEILEDADDAASAASKPPSAFLRN) are disordered. The span at 8–19 (KSTITDEQNPSR) shows a compositional bias: polar residues. The segment covering 22–38 (NDDDDLEDGEILEDADD) has biased composition (acidic residues). Positions 39–49 (AASAASKPPSA) are enriched in low complexity. 2 EIF4G-binding regions span residues 55–58 (HPLE) and 65–101 (FDNPSAKSKQAAWGSSIRPIYTFSTVEEFWSIYNNIH). Residues 73 to 78 (KQAAWG), Lys105, and 123 to 124 (WE) each bind mRNA. Cys128 and Cys166 are oxidised to a cystine. Positions 149–158 (YTLLAMIGEQ) are EIF4G-binding. MRNA contacts are provided by residues 173–178 (RNRQDK) and 218–222 (KKHER).

Belongs to the eukaryotic initiation factor 4E family. In terms of assembly, EIF4F is a multi-subunit complex, the composition of which varies with external and internal environmental conditions. It is composed of at least EIF4A, EIF4E and EIF4G. EIF4E is also known to interact with other partners. In higher plants two isoforms of EIF4F have been identified, named isoform EIF4F and isoform EIF(iso)4F. Isoform EIF4F has subunits p220 and p26, whereas isoform EIF(iso)4F has subunits p82 and p28. (Microbial infection) Interacts with potyvirus viral genome-linked protein (VPg); this interaction is possible in susceptible hosts but impaired in resistant plants. Post-translationally, according to the redox status, the Cys-128-Cys-166 disulfide bridge may have a role in regulating protein function by affecting its ability to bind capped mRNA.

It localises to the nucleus. Its subcellular location is the cytoplasm. In terms of biological role, component of the protein complex eIF4F, which is involved in the recognition of the mRNA cap, ATP-dependent unwinding of 5'-terminal secondary structure and recruitment of mRNA to the ribosome. Recognizes and binds the 7-methylguanosine-containing mRNA cap during an early step in the initiation of protein synthesis and facilitates ribosome binding by inducing the unwinding of the mRNAs secondary structures. Key component of recessive resistance to potyviruses. Functionally, (Microbial infection) Susceptibility host factor required for viral infection by recruiting viral RNAs to the host ribosomal complex via an interaction with viral genome-linked protein (VPg). The sequence is that of Eukaryotic translation initiation factor 4E-1 from Phaseolus vulgaris (Kidney bean).